Reading from the N-terminus, the 179-residue chain is Large ribosomal subunit protein uL10 (179 aa).

Belongs to the universal ribosomal protein uL10 family. In terms of assembly, part of the ribosomal stalk of the 50S ribosomal subunit. The N-terminus interacts with L11 and the large rRNA to form the base of the stalk. The C-terminus forms an elongated spine to which L12 dimers bind in a sequential fashion forming a multimeric L10(L12)X complex.

In terms of biological role, forms part of the ribosomal stalk, playing a central role in the interaction of the ribosome with GTP-bound translation factors. The chain is Large ribosomal subunit protein uL10 from Thermotoga petrophila (strain ATCC BAA-488 / DSM 13995 / JCM 10881 / RKU-1).